Consider the following 166-residue polypeptide: Large ribosomal subunit protein uL10 (166 aa).

This sequence belongs to the universal ribosomal protein uL10 family. As to quaternary structure, part of the ribosomal stalk of the 50S ribosomal subunit. The N-terminus interacts with L11 and the large rRNA to form the base of the stalk. The C-terminus forms an elongated spine to which L12 dimers bind in a sequential fashion forming a multimeric L10(L12)X complex.

Functionally, forms part of the ribosomal stalk, playing a central role in the interaction of the ribosome with GTP-bound translation factors. This chain is Large ribosomal subunit protein uL10, found in Bacillus cereus (strain 03BB102).